We begin with the raw amino-acid sequence, 209 residues long: Urease accessory protein UreG (209 aa).

Residue 18–25 coordinates GTP; it reads GPVGSGKT.

Belongs to the SIMIBI class G3E GTPase family. UreG subfamily. As to quaternary structure, homodimer. UreD, UreF and UreG form a complex that acts as a GTP-hydrolysis-dependent molecular chaperone, activating the urease apoprotein by helping to assemble the nickel containing metallocenter of UreC. The UreE protein probably delivers the nickel.

Its subcellular location is the cytoplasm. In terms of biological role, facilitates the functional incorporation of the urease nickel metallocenter. This process requires GTP hydrolysis, probably effectuated by UreG. In Cupriavidus pinatubonensis (strain JMP 134 / LMG 1197) (Cupriavidus necator (strain JMP 134)), this protein is Urease accessory protein UreG.